We begin with the raw amino-acid sequence, 242 residues long: Protein ABHD14A (242 aa).

Residues 6–26 (AALLGLGLLLMFLLYMGLPGP) form a helical; Signal-anchor for type II membrane protein membrane-spanning segment. Residue Asn38 is glycosylated (N-linked (GlcNAc...) asparagine). Residues Ser142, Asp193, and His220 each act as charge relay system in the active site.

The protein belongs to the AB hydrolase superfamily. ABHD14 family.

Its subcellular location is the cytoplasm. It is found in the membrane. Functionally, possible role in granule neuron development. The chain is Protein ABHD14A from Rattus norvegicus (Rat).